A 462-amino-acid polypeptide reads, in one-letter code: A-type ATP synthase subunit B (462 aa).

Belongs to the ATPase alpha/beta chains family. Has multiple subunits with at least A(3), B(3), C, D, E, F, H, I and proteolipid K(x).

The protein localises to the cell membrane. Functionally, component of the A-type ATP synthase that produces ATP from ADP in the presence of a proton gradient across the membrane. The B chain is a regulatory subunit. This Methanococcus maripaludis (strain DSM 14266 / JCM 13030 / NBRC 101832 / S2 / LL) protein is A-type ATP synthase subunit B.